Consider the following 363-residue polypeptide: NAD(P)H-quinone oxidoreductase subunit 1, chloroplastic (363 aa).

8 consecutive transmembrane segments (helical) span residues 27–47, 93–113, 124–144, 162–182, 200–220, 250–270, 303–323, and 343–363; these read LIPILIILLGATLGVLVIVWL, WLFSVGPALVVVPVFLSYLVV, LGVGILFWIALSSIAPLGLLM, AAQAISYEIPLALCVLSVALL, ILGWNIWRQPIGFIAFLIASL, FGLFYVGSYLNLLVSALFVSV, ATLGIAITLGKAYLFLFLSIL, and FLLPVSLGNLLLTASLQLALL.

This sequence belongs to the complex I subunit 1 family. As to quaternary structure, NDH is composed of at least 16 different subunits, 5 of which are encoded in the nucleus.

It is found in the plastid. The protein localises to the chloroplast thylakoid membrane. It carries out the reaction a plastoquinone + NADH + (n+1) H(+)(in) = a plastoquinol + NAD(+) + n H(+)(out). The catalysed reaction is a plastoquinone + NADPH + (n+1) H(+)(in) = a plastoquinol + NADP(+) + n H(+)(out). In terms of biological role, NDH shuttles electrons from NAD(P)H:plastoquinone, via FMN and iron-sulfur (Fe-S) centers, to quinones in the photosynthetic chain and possibly in a chloroplast respiratory chain. The immediate electron acceptor for the enzyme in this species is believed to be plastoquinone. Couples the redox reaction to proton translocation, and thus conserves the redox energy in a proton gradient. The sequence is that of NAD(P)H-quinone oxidoreductase subunit 1, chloroplastic from Chaetosphaeridium globosum (Charophycean green alga).